The chain runs to 524 residues: Serine/threonine-protein kinase PAK 2 (524 aa).

Residues 1–81 (MSDNGELEDK…PEISPPSDFE (81 aa)) form a disordered region. Serine 2 carries the post-translational modification N-acetylserine. A phosphoserine mark is found at serine 2, serine 20, serine 55, and serine 58. A Phosphothreonine modification is found at threonine 60. Residue lysine 62 is modified to N6-acetyllysine. Position 64 is a phosphoserine (serine 64). The span at 67–81 (KEKERPEISPPSDFE) shows a compositional bias: basic and acidic residues. A GTPase-binding region spans residues 69-112 (KERPEISPPSDFEHTIHVGFDAVTGEFTGMPEQWARLLQTSNIT). Residues 69-137 (KERPEISPPS…KFYDSNTVKQ (69 aa)) form an autoregulatory region region. The 14-residue stretch at 74–87 (ISPPSDFEHTIHVG) folds into the CRIB domain. N6-acetyllysine is present on lysine 128. At threonine 134 the chain carries Phosphothreonine. Residue tyrosine 139 is modified to Phosphotyrosine. At serine 141 the chain carries Phosphoserine. Residues 142–188 (FTPPEKDGFPSGTPALNTKGSETSAVVTEEDDDDEDAAPPVIAPRPD) are disordered. Threonine 143 is subject to Phosphothreonine. Serine 152 is subject to Phosphoserine. Threonine 154, threonine 159, and threonine 169 each carry phosphothreonine. Positions 155–167 (PALNTKGSETSAV) are enriched in polar residues. The segment covering 169–178 (TEEDDDDEDA) has biased composition (acidic residues). Residue serine 197 is modified to Phosphoserine. The tract at residues 204–228 (APVGDSNVDSGAKSSDKQKKKAKMT) is disordered. The Nuclear localization signal motif lies at 245-251 (PKKKYTR). One can recognise a Protein kinase domain in the interval 249–499 (YTRYEKIGQG…SAKELLQHPF (251 aa)). Residues 255–263 (IGQGASGTV) and lysine 278 each bind ATP. The active-site Proton acceptor is arginine 367. Position 402 is a phosphothreonine; by autocatalysis (threonine 402).

It belongs to the protein kinase superfamily. STE Ser/Thr protein kinase family. STE20 subfamily. In terms of assembly, interacts tightly with GTP-bound but not GDP-bound CDC42/p21 and RAC1. Interacts with SH3MD4. Interacts with SCRIB. Interacts with ARHGEF7 and GIT1. PAK-2p34 interacts with ARHGAP10. Interacts with RAC1. Full-length PAK2 is autophosphorylated when activated by CDC42/p21. Following cleavage, both peptides, PAK-2p27 and PAK-2p34, become highly autophosphorylated. Autophosphorylation of PAK-2p27 can occur in the absence of any effectors and is dependent on phosphorylation of Thr-402, because PAK-2p27 is acting as an exogenous substrate. Post-translationally, during apoptosis proteolytically cleaved by caspase-3 or caspase-3-like proteases to yield active PAK-2p34. In terms of processing, ubiquitinated, leading to its proteasomal degradation.

It localises to the cytoplasm. The protein resides in the nucleus. It is found in the perinuclear region. The protein localises to the membrane. It carries out the reaction L-seryl-[protein] + ATP = O-phospho-L-seryl-[protein] + ADP + H(+). The catalysed reaction is L-threonyl-[protein] + ATP = O-phospho-L-threonyl-[protein] + ADP + H(+). With respect to regulation, activated by binding small G proteins. Binding of GTP-bound CDC42 or RAC1 to the autoregulatory region releases monomers from the autoinhibited dimer, enables phosphorylation of Thr-402 and allows the kinase domain to adopt an active structure. Following caspase cleavage, autophosphorylated PAK-2p34 is constitutively active. Functionally, serine/threonine protein kinase that plays a role in a variety of different signaling pathways including cytoskeleton regulation, cell motility, cell cycle progression, apoptosis or proliferation. Acts as a downstream effector of the small GTPases CDC42 and RAC1. Activation by the binding of active CDC42 and RAC1 results in a conformational change and a subsequent autophosphorylation on several serine and/or threonine residues. Full-length PAK2 stimulates cell survival and cell growth. Phosphorylates MAPK4 and MAPK6 and activates the downstream target MAPKAPK5, a regulator of F-actin polymerization and cell migration. Phosphorylates JUN and plays an important role in EGF-induced cell proliferation. Phosphorylates many other substrates including histone H4 to promote assembly of H3.3 and H4 into nucleosomes, BAD, ribosomal protein S6, or MBP. Phosphorylates CASP7, thereby preventing its activity. Additionally, associates with ARHGEF7 and GIT1 to perform kinase-independent functions such as spindle orientation control during mitosis. On the other hand, apoptotic stimuli such as DNA damage lead to caspase-mediated cleavage of PAK2, generating PAK-2p34, an active p34 fragment that translocates to the nucleus and promotes cellular apoptosis involving the JNK signaling pathway. Caspase-activated PAK2 phosphorylates MKNK1 and reduces cellular translation. The sequence is that of Serine/threonine-protein kinase PAK 2 (Pak2) from Mus musculus (Mouse).